Reading from the N-terminus, the 333-residue chain is Holliday junction branch migration complex subunit RuvB (333 aa).

Residues 1–182 (MDERLLSGES…FGVLSRLEYY (182 aa)) are large ATPase domain (RuvB-L). ATP is bound by residues L21, R22, G63, K66, T67, T68, 129–131 (EDF), R172, Y182, and R219. T67 contributes to the Mg(2+) binding site. Residues 183–253 (TVDQLSAIVE…ITQMALELLQ (71 aa)) form a small ATPAse domain (RuvB-S) region. Residues 256–333 (KLGLDHIDHK…EHFGMEMPKV (78 aa)) are head domain (RuvB-H). DNA is bound by residues R311 and R316.

Belongs to the RuvB family. Homohexamer. Forms an RuvA(8)-RuvB(12)-Holliday junction (HJ) complex. HJ DNA is sandwiched between 2 RuvA tetramers; dsDNA enters through RuvA and exits via RuvB. An RuvB hexamer assembles on each DNA strand where it exits the tetramer. Each RuvB hexamer is contacted by two RuvA subunits (via domain III) on 2 adjacent RuvB subunits; this complex drives branch migration. In the full resolvosome a probable DNA-RuvA(4)-RuvB(12)-RuvC(2) complex forms which resolves the HJ.

The protein localises to the cytoplasm. The enzyme catalyses ATP + H2O = ADP + phosphate + H(+). In terms of biological role, the RuvA-RuvB-RuvC complex processes Holliday junction (HJ) DNA during genetic recombination and DNA repair, while the RuvA-RuvB complex plays an important role in the rescue of blocked DNA replication forks via replication fork reversal (RFR). RuvA specifically binds to HJ cruciform DNA, conferring on it an open structure. The RuvB hexamer acts as an ATP-dependent pump, pulling dsDNA into and through the RuvAB complex. RuvB forms 2 homohexamers on either side of HJ DNA bound by 1 or 2 RuvA tetramers; 4 subunits per hexamer contact DNA at a time. Coordinated motions by a converter formed by DNA-disengaged RuvB subunits stimulates ATP hydrolysis and nucleotide exchange. Immobilization of the converter enables RuvB to convert the ATP-contained energy into a lever motion, pulling 2 nucleotides of DNA out of the RuvA tetramer per ATP hydrolyzed, thus driving DNA branch migration. The RuvB motors rotate together with the DNA substrate, which together with the progressing nucleotide cycle form the mechanistic basis for DNA recombination by continuous HJ branch migration. Branch migration allows RuvC to scan DNA until it finds its consensus sequence, where it cleaves and resolves cruciform DNA. In Bacillus anthracis (strain A0248), this protein is Holliday junction branch migration complex subunit RuvB.